Here is a 450-residue protein sequence, read N- to C-terminus: Tubulin alpha chain (450 aa).

Gln-11 lines the GTP pocket. Lys-40 is modified (N6-acetyllysine). Positions 71, 140, 144, 145, 179, 206, and 228 each coordinate GTP. Residue Glu-71 coordinates Mg(2+). Glu-254 is an active-site residue.

Belongs to the tubulin family. Dimer of alpha and beta chains. A typical microtubule is a hollow water-filled tube with an outer diameter of 25 nm and an inner diameter of 15 nM. Alpha-beta heterodimers associate head-to-tail to form protofilaments running lengthwise along the microtubule wall with the beta-tubulin subunit facing the microtubule plus end conferring a structural polarity. Microtubules usually have 13 protofilaments but different protofilament numbers can be found in some organisms and specialized cells. It depends on Mg(2+) as a cofactor. In terms of processing, acetylation of alpha chains at Lys-40 stabilizes microtubules and affects affinity and processivity of microtubule motors. This modification has a role in multiple cellular functions, ranging from cell motility, cell cycle progression or cell differentiation to intracellular trafficking and signaling.

Its subcellular location is the cytoplasm. The protein resides in the cytoskeleton. The enzyme catalyses GTP + H2O = GDP + phosphate + H(+). Its function is as follows. Tubulin is the major constituent of microtubules, a cylinder consisting of laterally associated linear protofilaments composed of alpha- and beta-tubulin heterodimers. Microtubules grow by the addition of GTP-tubulin dimers to the microtubule end, where a stabilizing cap forms. Below the cap, tubulin dimers are in GDP-bound state, owing to GTPase activity of alpha-tubulin. The protein is Tubulin alpha chain of Euplotes vannus (Marine ciliate).